The following is a 395-amino-acid chain: Elongation factor Tu (395 aa).

Positions 10 to 204 (KSHVNIGTIG…AVDEYIPTPE (195 aa)) constitute a tr-type G domain. The segment at 19–26 (GHVDHGKT) is G1. 19 to 26 (GHVDHGKT) lines the GTP pocket. Threonine 26 is a binding site for Mg(2+). Residues 60–64 (GITIN) are G2. A G3 region spans residues 81 to 84 (DCPG). Residues 81–85 (DCPGH) and 136–139 (NKMD) each bind GTP. Residues 136–139 (NKMD) are G4. Positions 174–176 (SAL) are G5.

The protein belongs to the TRAFAC class translation factor GTPase superfamily. Classic translation factor GTPase family. EF-Tu/EF-1A subfamily. In terms of assembly, monomer.

Its subcellular location is the cytoplasm. The catalysed reaction is GTP + H2O = GDP + phosphate + H(+). GTP hydrolase that promotes the GTP-dependent binding of aminoacyl-tRNA to the A-site of ribosomes during protein biosynthesis. The polypeptide is Elongation factor Tu (Enterococcus faecalis (strain ATCC 700802 / V583)).